A 514-amino-acid polypeptide reads, in one-letter code: Monocarboxylate transporter 10 (514 aa).

Residues 1–64 form a disordered region; that stretch reads MVPSQEEPAA…TGNQEPPEPP (64 aa). The Cytoplasmic portion of the chain corresponds to 1 to 65; it reads MVPSQEEPAA…GNQEPPEPPE (65 aa). Residues 66-86 traverse the membrane as a helical segment; it reads GGWGWLVMLAAMWCNGSVFGI. At 87-113 the chain is on the extracellular side; the sequence is QNAYGVLFVSMLETFGAKDDDNMAFKA. Residues 114–134 traverse the membrane as a helical segment; sequence AWVGSLSMGMIFFCCPIVSVF. Residues 135–143 lie on the Cytoplasmic side of the membrane; the sequence is TDMFGCRRT. Residues 144–164 traverse the membrane as a helical segment; it reads AVLGAAVGFVGLMSSSFVSSI. The Extracellular portion of the chain corresponds to 165-170; the sequence is EPLYFT. The chain crosses the membrane as a helical span at residues 171-191; the sequence is YGVVFACGCSFAYQPSLVILG. Topologically, residues 192–199 are cytoplasmic; the sequence is HYFKKRLG. The chain crosses the membrane as a helical span at residues 200 to 220; it reads LVNGIVTAGSSVFTILLPLLL. At 221–227 the chain is on the extracellular side; that stretch reads GNLTSTV. Residues 228 to 248 traverse the membrane as a helical segment; sequence GLCYTLRILCIFMFVLFLAGF. Residues 249–290 lie on the Cytoplasmic side of the membrane; the sequence is TYRPLVPSSKEKESEDSRSSFFSRRKLSPPKKIFNFALFKET. Ser-262 carries the phosphoserine modification. A helical membrane pass occupies residues 291–311; the sequence is AYAVWAAGIPLALFGYFVPYV. The Extracellular segment spans residues 312-328; sequence HLMNHVKERFKDVNNKE. The helical transmembrane segment at 329–349 threads the bilayer; the sequence is VLFMCIGVTSGVGRLLFGRIA. Position 350 (Asp-350) is a topological domain, cytoplasmic. The helical transmembrane segment at 351 to 371 threads the bilayer; that stretch reads YLPGVKKVYLQVLSFFFIGLT. The Extracellular portion of the chain corresponds to 372 to 395; it reads SMMIPLCSVFGALIALCLIMGLFD. The helical transmembrane segment at 396–416 threads the bilayer; sequence GCFISIMAPIAFELVGPQDAS. The Cytoplasmic segment spans residues 417 to 418; that stretch reads QA. The chain crosses the membrane as a helical span at residues 419–439; the sequence is IGFLLGFMSIPMTVGPPVAGL. At 440-450 the chain is on the extracellular side; sequence LHDKLGSYDLA. Residues 451 to 471 form a helical membrane-spanning segment; sequence FYLAGIPPFIGGAVLCLIPWI. Residues 472–514 are Cytoplasmic-facing; that stretch reads HSKKQREISKNTGGEKMEKMLANQSSLLSSSSGIFKKESDSII. Residues Ser-497, Ser-500, Ser-502, and Ser-503 each carry the phosphoserine modification.

The protein belongs to the major facilitator superfamily. Monocarboxylate porter (TC 2.A.1.13) family. Post-translationally, not N-glycosylated. In terms of tissue distribution, strongly expressed in intestine, placenta and liver. In small intestine is detected in the basolateral membrane (at protein level).

The protein localises to the cell membrane. The protein resides in the basolateral cell membrane. The catalysed reaction is L-tryptophan(in) = L-tryptophan(out). It catalyses the reaction L-tyrosine(in) = L-tyrosine(out). The enzyme catalyses L-phenylalanine(in) = L-phenylalanine(out). It carries out the reaction 3,3',5-triiodo-L-thyronine(out) = 3,3',5-triiodo-L-thyronine(in). The catalysed reaction is L-thyroxine(out) = L-thyroxine(in). In terms of biological role, sodium- and proton-independent thyroid hormones and aromatic acids transporter. Mediates both uptake and efflux of 3,5,3'-triiodothyronine (T3) and 3,5,3',5'-tetraiodothyronine (T4) with high affinity, suggesting a role in the homeostasis of thyroid hormone levels. Responsible for low affinity bidirectional transport of the aromatic amino acids, such as phenylalanine, tyrosine, tryptophan and L-3,4-dihydroxyphenylalanine (L-dopa). Plays an important role in homeostasis of aromatic amino acids. This chain is Monocarboxylate transporter 10 (Slc16a10), found in Rattus norvegicus (Rat).